Reading from the N-terminus, the 410-residue chain is Divergent protein kinase domain 1A (410 aa).

The Cytoplasmic segment spans residues 1-5 (MARLS). A helical membrane pass occupies residues 6–26 (YVRIKYLFFSWLAVFIGSWVI). The Lumenal segment spans residues 27-410 (YVRYNSYTEL…WKKISHTNDS (384 aa)).

Belongs to the DIPK family. Among the many cysteines in the lumenal domain, most are probably involved in disulfide bonds.

It is found in the endoplasmic reticulum membrane. This chain is Divergent protein kinase domain 1A (dipk1a), found in Xenopus laevis (African clawed frog).